The primary structure comprises 506 residues: 2,3-bisphosphoglycerate-independent phosphoglycerate mutase (506 aa).

Asp9 and Ser59 together coordinate Mn(2+). Catalysis depends on Ser59, which acts as the Phosphoserine intermediate. Residues His120, 149–150 (RD), Arg181, Arg187, 254–257 (RADR), and Lys327 each bind substrate. Residues Asp394, His398, Asp435, His436, and His452 each contribute to the Mn(2+) site.

This sequence belongs to the BPG-independent phosphoglycerate mutase family. It depends on Mn(2+) as a cofactor.

The catalysed reaction is (2R)-2-phosphoglycerate = (2R)-3-phosphoglycerate. It participates in carbohydrate degradation; glycolysis; pyruvate from D-glyceraldehyde 3-phosphate: step 3/5. In terms of biological role, catalyzes the interconversion of 2-phosphoglycerate and 3-phosphoglycerate. In Natronomonas pharaonis (strain ATCC 35678 / DSM 2160 / CIP 103997 / JCM 8858 / NBRC 14720 / NCIMB 2260 / Gabara) (Halobacterium pharaonis), this protein is 2,3-bisphosphoglycerate-independent phosphoglycerate mutase.